A 550-amino-acid polypeptide reads, in one-letter code: Glucose-6-phosphate isomerase (550 aa).

D-glucose 6-phosphate-binding positions include 164-165 (GS), 215-220 (SKTFTT), Gln359, Glu363, and His394. The active-site Proton donor is Glu363. His394 is a catalytic residue. Phosphothreonine is present on Thr455. Position 516 (Lys516) interacts with D-glucose 6-phosphate. Residue Lys516 is part of the active site.

It belongs to the GPI family. In terms of assembly, homodimer.

It localises to the cytoplasm. Its subcellular location is the cytosol. It carries out the reaction alpha-D-glucose 6-phosphate = beta-D-fructose 6-phosphate. The protein operates within carbohydrate degradation; glycolysis; D-glyceraldehyde 3-phosphate and glycerone phosphate from D-glucose: step 2/4. Functionally, in the cytoplasm, catalyzes the conversion of glucose-6-phosphate to fructose-6-phosphate, the second step in glycolysis, and the reverse reaction during gluconeogenesis. The chain is Glucose-6-phosphate isomerase (pgi1) from Schizosaccharomyces pombe (strain 972 / ATCC 24843) (Fission yeast).